The chain runs to 1465 residues: Claspin (1465 aa).

The segment covering 1–12 (MSESLAETAAAA) has biased composition (low complexity). Disordered stretches follow at residues 1 to 490 (MSES…KAKV), 544 to 566 (ATALAGGSPMPSRQPRKSVGLRM), and 585 to 636 (ATEF…TEDM). 7 positions are modified to phosphoserine: Ser-45, Ser-49, Ser-52, Ser-64, Ser-75, Ser-109, and Ser-114. The span at 121–133 (QAEKKTQKEEGKQ) shows a compositional bias: basic and acidic residues. Basic residues predominate over residues 154 to 163 (KSNKTKKAVK). Positions 205–216 (EYDHHQQHEKPA) are enriched in basic and acidic residues. The segment covering 217 to 228 (KTQKSKKLAKKQ) has biased composition (basic residues). Composition is skewed to basic and acidic residues over residues 229-246 (KQQEDDKEDNGTEQEKKK), 254-263 (KKSDKSKIDS), 273-286 (EDLKMYQEDQEPQK), and 296-335 (TNKDSKEESGEDQEHQEQKKPLKKIKLDNIDTKEDKEQIV). A coiled-coil region spans residues 260–281 (KIDSLMDNEEDAGEDLKMYQED). Residues 336–346 (KPKKMAKKNKQ) show a composition bias toward basic residues. Ser-350 and Ser-354 each carry phosphoserine. Over residues 358–373 (QNEKVDQDHDLKKMSS) the composition is skewed to basic and acidic residues. Residues 375–388 (NELEMGSDKEDQEM) are compositionally biased toward acidic residues. Ser-381, Ser-404, Ser-406, Ser-432, Ser-434, Ser-444, Ser-456, Ser-458, and Ser-468 each carry phosphoserine. The segment covering 400–417 (QRMDSESEDEIPKTESEK) has biased composition (basic and acidic residues). Over residues 432–441 (SESEPEETAE) the composition is skewed to acidic residues. The span at 456–470 (SESEPELDNPEESAG) shows a compositional bias: acidic residues. Positions 564–587 (LRMTREELEAYAKLMEDRAKEATE) form a coiled coil. Residues 594–606 (ESDEEDDSENEEP) show a composition bias toward acidic residues. Thr-693 bears the Phosphothreonine mark. Residues 839–874 (LITKKRMEDLRKKQAEEQEKMAEDEEEGMDVDEEYE) adopt a coiled-coil conformation. Residues 845–859 (MEDLRKKQAEEQEKM) are compositionally biased toward basic and acidic residues. Positions 845-977 (MEDLRKKQAE…LDLLQTPKPS (133 aa)) are disordered. Acidic residues-rich tracts occupy residues 860 to 875 (AEDEEEGMDVDEEYEP), 913 to 942 (ADEDPEDNPVEDSEDEKNDSESEQECEANP), and 960 to 969 (DDNSDEDDLD). Ser-963 carries the phosphoserine modification. Thr-973 carries the phosphothreonine modification. Residue Ser-990 is modified to Phosphoserine. The disordered stretch occupies residues 1058 to 1154 (CSGTFATQLP…AEPVEEIPET (97 aa)). Residues 1067–1076 (PSQAPTQQPE) are compositionally biased toward low complexity. Ser-1093 and Ser-1094 each carry phosphoserine. The segment covering 1094–1103 (SDEEAQEDAL) has biased composition (acidic residues). Over residues 1109–1123 (RNKKLTKKRPKKKAK) the composition is skewed to basic residues. Acidic residues predominate over residues 1127–1154 (SDDEDSDDEVEEFDEESDAEPVEEIPET). Phosphoserine is present on Ser-1287.

Belongs to the claspin family. Phosphorylated in response to DNA damage by IR and HU treatment. Phosphorylation does not require mei-41 or tefu. As to expression, detected in the ovary but not in the testis (at protein level).

Its subcellular location is the nucleus. Functionally, required for checkpoint signaling in response to DNA replication stress; either resulting from normal embryogenesis or induced by the DNA synthesis inhibitor hydroxyurea (HU). It is not required for the G2 arrest resulting from DNA double strand breaks induced by ionizing irradiation (IR). Necessary for the timely phosphorylation of Cdk1 at the mid-blastula transition. May have a minor role in maintaining genomic stability in mitotic cells. The sequence is that of Claspin from Drosophila melanogaster (Fruit fly).